We begin with the raw amino-acid sequence, 352 residues long: GTPase Obg (352 aa).

The region spanning 1 to 159 is the Obg domain; that stretch reads MHFLDQAKIF…MYVWLRLKLL (159 aa). The interval 122 to 142 is disordered; that stretch reads DGGRGNASYKTSTNRAPRQHG. The OBG-type G domain maps to 160–328; it reads ADAGLVGLPN…LLDAVLEYLP (169 aa). GTP-binding positions include 166 to 173, 191 to 195, 212 to 215, 280 to 283, and 309 to 311; these read GLPNAGKS, FTTLR, DIPG, NKID, and SGA. Positions 173 and 193 each coordinate Mg(2+).

Belongs to the TRAFAC class OBG-HflX-like GTPase superfamily. OBG GTPase family. As to quaternary structure, monomer. Requires Mg(2+) as cofactor.

Its subcellular location is the cytoplasm. An essential GTPase which binds GTP, GDP and possibly (p)ppGpp with moderate affinity, with high nucleotide exchange rates and a fairly low GTP hydrolysis rate. Plays a role in control of the cell cycle, stress response, ribosome biogenesis and in those bacteria that undergo differentiation, in morphogenesis control. The polypeptide is GTPase Obg (Novosphingobium aromaticivorans (strain ATCC 700278 / DSM 12444 / CCUG 56034 / CIP 105152 / NBRC 16084 / F199)).